The sequence spans 1077 residues: Carbamoyl phosphate synthase large chain (1077 aa).

The interval 1 to 403 is carboxyphosphate synthetic domain; the sequence is MPKRTDIQSI…SLHKALRGLE (403 aa). Positions 129, 169, 175, 176, 208, 210, 215, 241, 242, 243, 285, and 299 each coordinate ATP. The 196-residue stretch at 133-328 folds into the ATP-grasp 1 domain; it reads DKAMKSIGLE…IAKIAAKLAV (196 aa). The Mg(2+) site is built by glutamine 285, glutamate 299, and asparagine 301. Mn(2+)-binding residues include glutamine 285, glutamate 299, and asparagine 301. The segment at 404-553 is oligomerization domain; it reads VGATGFDEMV…YSSYDEECEA (150 aa). A carbamoyl phosphate synthetic domain region spans residues 554-935; it reads NPTDKDKIMV…AYAKAELGCG (382 aa). The region spanning 678–869 is the ATP-grasp 2 domain; sequence QAAVERLGLL…LAKIAARVMA (192 aa). ATP is bound by residues arginine 714, arginine 753, leucine 755, glutamate 760, glycine 785, valine 786, histidine 787, serine 788, glutamine 828, and glutamate 840. The Mg(2+) site is built by glutamine 828, glutamate 840, and asparagine 842. The Mn(2+) site is built by glutamine 828, glutamate 840, and asparagine 842. An MGS-like domain is found at 936–1077; the sequence is SVYPEGGRAL…HAKVKASLEA (142 aa). An allosteric domain region spans residues 936 to 1077; sequence SVYPEGGRAL…HAKVKASLEA (142 aa).

Belongs to the CarB family. In terms of assembly, composed of two chains; the small (or glutamine) chain promotes the hydrolysis of glutamine to ammonia, which is used by the large (or ammonia) chain to synthesize carbamoyl phosphate. Tetramer of heterodimers (alpha,beta)4. It depends on Mg(2+) as a cofactor. The cofactor is Mn(2+).

The enzyme catalyses hydrogencarbonate + L-glutamine + 2 ATP + H2O = carbamoyl phosphate + L-glutamate + 2 ADP + phosphate + 2 H(+). It catalyses the reaction hydrogencarbonate + NH4(+) + 2 ATP = carbamoyl phosphate + 2 ADP + phosphate + 2 H(+). The protein operates within amino-acid biosynthesis; L-arginine biosynthesis; carbamoyl phosphate from bicarbonate: step 1/1. Its pathway is pyrimidine metabolism; UMP biosynthesis via de novo pathway; (S)-dihydroorotate from bicarbonate: step 1/3. Its function is as follows. Large subunit of the glutamine-dependent carbamoyl phosphate synthetase (CPSase). CPSase catalyzes the formation of carbamoyl phosphate from the ammonia moiety of glutamine, carbonate, and phosphate donated by ATP, constituting the first step of 2 biosynthetic pathways, one leading to arginine and/or urea and the other to pyrimidine nucleotides. The large subunit (synthetase) binds the substrates ammonia (free or transferred from glutamine from the small subunit), hydrogencarbonate and ATP and carries out an ATP-coupled ligase reaction, activating hydrogencarbonate by forming carboxy phosphate which reacts with ammonia to form carbamoyl phosphate. The polypeptide is Carbamoyl phosphate synthase large chain (Vibrio parahaemolyticus serotype O3:K6 (strain RIMD 2210633)).